Reading from the N-terminus, the 285-residue chain is Diphthine methyl ester synthase (285 aa).

S-adenosyl-L-methionine contacts are provided by residues leucine 9, aspartate 84, glycine 87, 112-113 (SI), and leucine 163. The residue at position 171 (serine 171) is a Phosphoserine. S-adenosyl-L-methionine is bound by residues valine 225 and histidine 250.

This sequence belongs to the diphthine synthase family.

It carries out the reaction 2-[(3S)-amino-3-carboxypropyl]-L-histidyl-[translation elongation factor 2] + 4 S-adenosyl-L-methionine = diphthine methyl ester-[translation elongation factor 2] + 4 S-adenosyl-L-homocysteine + 3 H(+). Its pathway is protein modification; peptidyl-diphthamide biosynthesis. In terms of biological role, S-adenosyl-L-methionine-dependent methyltransferase that catalyzes four methylations of the modified target histidine residue in translation elongation factor 2 (EF-2), to form an intermediate called diphthine methyl ester. The four successive methylation reactions represent the second step of diphthamide biosynthesis. The sequence is that of Diphthine methyl ester synthase (DPH5) from Bos taurus (Bovine).